We begin with the raw amino-acid sequence, 199 residues long: MNKHTEHDTREHLLATGEQLCLQRGFTGMGLSELLKTAEVPKGSFYHYFRSKEAFGVAMLERHYAAYHQRLTELLQSGEGNYRDRILAYYQQTLNQFCQHGTISGCLTVKLSAEVCDLSEDMRSAMDKGARGVIALLSQALENGRENHCLTFCGEPLQQAQVLYALWLGANLQAKISRSFEPLENALAHVKNIIATPAV.

The HTH tetR-type domain occupies 7 to 67; that stretch reads HDTREHLLAT…AMLERHYAAY (61 aa). Residues 30 to 49 constitute a DNA-binding region (H-T-H motif); it reads GLSELLKTAEVPKGSFYHYF.

Functionally, involved in response to both electrophiles and reactive chlorine species (RCS). Represses the transcription of the nemRA-gloA operon by binding to the NemR box. The sequence is that of HTH-type transcriptional repressor NemR (nemR) from Escherichia coli O6:H1 (strain CFT073 / ATCC 700928 / UPEC).